The primary structure comprises 90 residues: Antitoxin epsilon 2 (90 aa).

Belongs to the epsilon antitoxin family. As to quaternary structure, in the presence of the zeta toxin, forms an inactive PezA(2)PezT(2) heterotetramer.

Antitoxin component of a type II toxin-antitoxin (TA) system. Neutralizes the toxic effect of zeta toxin. Part of a postsegregational killing (PSK) system involved in the killing of plasmid-free cells. Continuous synthesis of the epsilon antitoxin is required to counteract the zeta toxin. This is Antitoxin epsilon 2 from Enterococcus faecalis (Streptococcus faecalis).